The primary structure comprises 178 residues: Protein GrpE (178 aa).

The tract at residues 1-22 (MSENQNPSPSPEEIEAAMSANA) is disordered.

This sequence belongs to the GrpE family. In terms of assembly, homodimer.

The protein localises to the cytoplasm. Functionally, participates actively in the response to hyperosmotic and heat shock by preventing the aggregation of stress-denatured proteins, in association with DnaK and GrpE. It is the nucleotide exchange factor for DnaK and may function as a thermosensor. Unfolded proteins bind initially to DnaJ; upon interaction with the DnaJ-bound protein, DnaK hydrolyzes its bound ATP, resulting in the formation of a stable complex. GrpE releases ADP from DnaK; ATP binding to DnaK triggers the release of the substrate protein, thus completing the reaction cycle. Several rounds of ATP-dependent interactions between DnaJ, DnaK and GrpE are required for fully efficient folding. The chain is Protein GrpE from Acidovorax ebreus (strain TPSY) (Diaphorobacter sp. (strain TPSY)).